The sequence spans 250 residues: PTB-containing, cubilin and LRP1-interacting protein (250 aa).

A PID domain is found at 93–250 (VTYLGKVSTT…VSQELESDDG (158 aa)). Positions 229 to 250 (DGRIHSNSSSEEVSQELESDDG) are disordered. Phosphoserine is present on residues Ser-236 and Ser-247. Positions 241-250 (VSQELESDDG) are enriched in acidic residues.

Found in a complex with PID1/PCLI1, LRP1 and CUBNI. Interacts with LRP1 and CUBN. In terms of tissue distribution, expressed in subcutaneous fat, heart, skeletal muscle, brain, colon, thymus, spleen, kidney, liver, small intestine, placenta, lung and peripheral blood leukocyte.

The protein localises to the cytoplasm. In terms of biological role, increases proliferation of preadipocytes without affecting adipocytic differentiation. The polypeptide is PTB-containing, cubilin and LRP1-interacting protein (PID1) (Homo sapiens (Human)).